Consider the following 685-residue polypeptide: Exocyst complex component 8 (685 aa).

Residues 151–251 (YLVYNGDLTE…WLEILEQTKK (101 aa)) form the PH domain. Basic and acidic residues predominate over residues 254–263 (ALNEKQKQEE). The disordered stretch occupies residues 254-273 (ALNEKQKQEETTPQLPVVPE).

This sequence belongs to the EXO84 family. As to quaternary structure, the exocyst complex is composed of exoc1, exoc2, exoc3, exoc4, exoc5, exoc6, exoc7 and exoc8.

It localises to the cytoplasm. It is found in the perinuclear region. Its subcellular location is the cell projection. The protein localises to the growth cone. In terms of biological role, component of the exocyst complex involved in the docking of exocytic vesicles with fusion sites on the plasma membrane. The polypeptide is Exocyst complex component 8 (exoc8) (Xenopus laevis (African clawed frog)).